A 180-amino-acid polypeptide reads, in one-letter code: UPF0303 protein PSEEN3311 (180 aa).

It belongs to the UPF0303 family.

In Pseudomonas entomophila (strain L48), this protein is UPF0303 protein PSEEN3311.